The primary structure comprises 360 residues: Cannabinoid receptor 2 (360 aa).

At 1–33 (MEECWVTEIANGSKDGLDSNPMKDYMILSGPQK) the chain is on the extracellular side. Asparagine 11 carries N-linked (GlcNAc...) asparagine glycosylation. Residues 34–59 (TAVAVLCTLLGLLSALENVAVLYLIL) traverse the membrane as a helical segment. The Cytoplasmic portion of the chain corresponds to 60–71 (SSHQLRRKPSYL). The helical transmembrane segment at 72–92 (FIGSLAGADFLASVVFACSFV) threads the bilayer. The Extracellular portion of the chain corresponds to 93–104 (NFHVFHGVDSKA). Residues 105 to 129 (VFLLKIGSVTMTFTASVGSLLLTAI) form a helical membrane-spanning segment. Topologically, residues 130 to 149 (DRYLCLRYPPSYKALLTRGR) are cytoplasmic. The chain crosses the membrane as a helical span at residues 150–172 (ALVTLGIMWVLSALVSYLPLMGW). Over 173-188 (TCCPRPCSELFPLIPN) the chain is Extracellular. Residues 189 to 214 (DYLLSWLLFIAFLFSGIIYTYGHVLW) traverse the membrane as a helical segment. Over 215-246 (KAHQHVASLSGHQDRQVPGMARMRLDVRLAKT) the chain is Cytoplasmic. A helical membrane pass occupies residues 247–267 (LGLVLAVLLICWFPVLALMAH). Topologically, residues 268 to 279 (SLATTLSDQVKK) are extracellular. A helical transmembrane segment spans residues 280 to 301 (AFAFCSMLCLINSMVNPVIYAL). At 302-360 (RSGEIRSSAHHCLAHWKKCVRGLGSEAKEEAPRSSVTETEADGKITPWPDSRDLDLSDC) the chain is on the cytoplasmic side. Residues 327-360 (EAKEEAPRSSVTETEADGKITPWPDSRDLDLSDC) form a disordered region. A phosphoserine mark is found at serine 335 and serine 336. Position 338 is a phosphothreonine (threonine 338). Basic and acidic residues predominate over residues 351–360 (DSRDLDLSDC). Serine 352 carries the post-translational modification Phosphoserine.

Belongs to the G-protein coupled receptor 1 family. In terms of processing, constitutively phosphorylated on Ser-352; phosphorylation increases cell internalization and desensitizes the receptor. Preferentially expressed in cells of the immune system with higher expression in B-cells and NK cells (at protein level). Expressed in skin in suprabasal layers and hair follicles (at protein level). Highly expressed in tonsil and to a lower extent in spleen, peripheral blood mononuclear cells, and thymus. PubMed:14657172 could not detect expression in normal brain. Expressed in brain by perivascular microglial cells and dorsal root ganglion sensory neurons (at protein level). Two isoforms are produced by alternative promoter usage and differ only in the 5' UTR: isoform CB2A is observed predominantly in testis with some expression in brain, while isoform CB2B is predominant in spleen and leukocytes.

It is found in the cell membrane. Its subcellular location is the cell projection. The protein localises to the dendrite. The protein resides in the perikaryon. Heterotrimeric G protein-coupled receptor for endocannabinoid 2-arachidonoylglycerol mediating inhibition of adenylate cyclase. May function in inflammatory response, nociceptive transmission and bone homeostasis. The protein is Cannabinoid receptor 2 (CNR2) of Homo sapiens (Human).